We begin with the raw amino-acid sequence, 86 residues long: Short neurotoxin homolog NTL1 (86 aa).

Residues 1–21 (MKTLLLSLVVLTIACLDLGYT) form the signal peptide. Cystine bridges form between cysteine 24–cysteine 45, cysteine 38–cysteine 62, cysteine 66–cysteine 78, and cysteine 79–cysteine 84.

Expressed by the venom gland.

It is found in the secreted. The protein is Short neurotoxin homolog NTL1 of Bungarus multicinctus (Many-banded krait).